Consider the following 24-residue polypeptide: Xenoposin-precursor fragment B1 (24 aa).

As to expression, expressed by the skin glands.

The protein localises to the secreted. Functionally, has antibacterial activity. This Xenopus borealis (Kenyan clawed frog) protein is Xenoposin-precursor fragment B1.